The sequence spans 476 residues: Glycogen synthase (476 aa).

Lysine 15 serves as a coordination point for ADP-alpha-D-glucose.

This sequence belongs to the glycosyltransferase 1 family. Bacterial/plant glycogen synthase subfamily.

It carries out the reaction [(1-&gt;4)-alpha-D-glucosyl](n) + ADP-alpha-D-glucose = [(1-&gt;4)-alpha-D-glucosyl](n+1) + ADP + H(+). It participates in glycan biosynthesis; glycogen biosynthesis. Synthesizes alpha-1,4-glucan chains using ADP-glucose. The polypeptide is Glycogen synthase (Haemophilus influenzae (strain 86-028NP)).